Consider the following 801-residue polypeptide: Squamosa promoter-binding-like protein 7 (801 aa).

2 disordered regions span residues 1-23 (MSSL…LVND) and 59-91 (SPPL…DRVR). The segment at 135–212 (VARCQVPDCE…ERHNNRRKRK (78 aa)) adopts an SBP-type; atypical zinc-finger fold. 8 residues coordinate Zn(2+): Cys-138, Cys-143, Cys-160, Cys-163, Cys-179, Cys-182, His-186, and Cys-198. Positions 195 to 211 (KRSCRRKLERHNNRRKR) match the Bipartite nuclear localization signal motif. The segment covering 203 to 213 (ERHNNRRKRKP) has biased composition (basic residues). 2 disordered regions span residues 203-258 (ERHN…PSLI) and 286-313 (GSGE…NKSA). Residues 222 to 233 (EQQQVLSQNDNS) are compositionally biased toward polar residues. Over residues 249-258 (QRAEEEPSLI) the composition is skewed to basic and acidic residues. Residues 304–313 (SPSNGDNKSA) are compositionally biased toward polar residues.

In terms of assembly, homodimer. Interacts with KIN17. Interacts with HY5. Zn(2+) serves as cofactor. As to expression, expressed in roots rosette leaves, cauline leaves, stems, flowers and siliques.

Its subcellular location is the nucleus speckle. Functionally, transcription factor that participates in reprogramming global gene expression during copper deficiency in order to improve the metal uptake and prioritize its distribution to copper proteins of major importance. Binds directly to 5'-GTAC-3' motifs in the microRNA (miRNA) promoter of the stress-responsive miRNAs miR398b and miR398c to activate their transcription. During copper deficiency, activates the copper transporters COPT1 and COPT2, and the copper chaperone CCH, directly or indirectly via miRNAs. Required for the expression of the miRNAs miR397, miR408 and miR857. Acts coordinately with HY5 to regulate miR408 and its target genes in response to changes in light and copper conditions. Activates miR857 and its target genes in response to low copper conditions. Involved in cadmium stress response by regulating miR397a, miR398b, miR398c and miR857. Required for iron homeostasis during copper deficiency. This chain is Squamosa promoter-binding-like protein 7 (SPL7), found in Arabidopsis thaliana (Mouse-ear cress).